A 614-amino-acid polypeptide reads, in one-letter code: Acid phosphatase (614 aa).

The N-terminal stretch at 1–22 (MKGTAASALLVALSATAAQARP) is a signal peptide. A Fibronectin type-III domain is found at 80–176 (IPKGMHIHYQ…EVLSFKTSRP (97 aa)). N-linked (GlcNAc...) asparagine glycans are attached at residues asparagine 110, asparagine 161, asparagine 242, asparagine 295, asparagine 333, asparagine 340, asparagine 352, asparagine 408, asparagine 429, asparagine 512, asparagine 523, asparagine 559, and asparagine 578. A propeptide spanning residues 606–614 (VAGGKKLHS) is cleaved from the precursor.

As to quaternary structure, monomer. Requires Cu cation as cofactor. Glycosylated; probably with N-linked high-mannose oligosaccharides.

The protein localises to the secreted. It catalyses the reaction a phosphate monoester + H2O = an alcohol + phosphate. Competitively inhibited by phosphomycin and inorganic orthophosphate. This Aspergillus ficuum protein is Acid phosphatase (aphA).